A 291-amino-acid chain; its full sequence is MSEKLQKVLARAGHGSRREIESIIEAGRVSVDGKIAKLGDRVEITPGLKIRIDGHLISVRESAEQICRVLAYYKPEGELCTRNDPEGRPTVFDRLPKLRGARWIAVGRLDVNTCGLLLFTTDGELANRLMHPSREVEREYAVRVFGQVDDAKLRDLSRGVQLEDGPAAFKTIKFSGGEGINQWYNVTLTEGRNREVRRLWEAVGVQVSRLIRVRYGDIPLPKGLPRGGWTELDLAQTNYLRELVELPPETSSKVAVEKDRRRMKANQIRRAVKRHSQVSGGRRSGGRNNNG.

The region spanning 3–75 (EKLQKVLARA…ICRVLAYYKP (73 aa)) is the S4 RNA-binding domain. Aspartate 110 (nucleophile) is an active-site residue. The interval 256-291 (VEKDRRRMKANQIRRAVKRHSQVSGGRRSGGRNNNG) is disordered.

It belongs to the pseudouridine synthase RsuA family.

The catalysed reaction is uridine(2605) in 23S rRNA = pseudouridine(2605) in 23S rRNA. In terms of biological role, responsible for synthesis of pseudouridine from uracil-2605 in 23S ribosomal RNA. In Escherichia coli O6:H1 (strain CFT073 / ATCC 700928 / UPEC), this protein is Ribosomal large subunit pseudouridine synthase B (rluB).